The following is a 129-amino-acid chain: Ribosome-binding factor A (129 aa).

The protein belongs to the RbfA family. As to quaternary structure, monomer. Binds 30S ribosomal subunits, but not 50S ribosomal subunits or 70S ribosomes.

Its subcellular location is the cytoplasm. Functionally, one of several proteins that assist in the late maturation steps of the functional core of the 30S ribosomal subunit. Associates with free 30S ribosomal subunits (but not with 30S subunits that are part of 70S ribosomes or polysomes). Required for efficient processing of 16S rRNA. May interact with the 5'-terminal helix region of 16S rRNA. The sequence is that of Ribosome-binding factor A from Actinobacillus succinogenes (strain ATCC 55618 / DSM 22257 / CCUG 43843 / 130Z).